Reading from the N-terminus, the 204-residue chain is uncharacterized protein (204 aa).

As to expression, component of the acid-soluble organic matrix of the aragonitic skeleton (at protein level).

It is found in the secreted. This is an uncharacterized protein from Acropora millepora (Staghorn coral).